A 137-amino-acid polypeptide reads, in one-letter code: Nucleoside diphosphate kinase (137 aa).

6 residues coordinate ATP: Lys-9, Phe-57, Arg-85, Thr-91, Arg-102, and Asn-112. Catalysis depends on His-115, which acts as the Pros-phosphohistidine intermediate.

Belongs to the NDK family. In terms of assembly, homotetramer. Mg(2+) serves as cofactor.

The protein resides in the cytoplasm. The catalysed reaction is a 2'-deoxyribonucleoside 5'-diphosphate + ATP = a 2'-deoxyribonucleoside 5'-triphosphate + ADP. It catalyses the reaction a ribonucleoside 5'-diphosphate + ATP = a ribonucleoside 5'-triphosphate + ADP. Major role in the synthesis of nucleoside triphosphates other than ATP. The ATP gamma phosphate is transferred to the NDP beta phosphate via a ping-pong mechanism, using a phosphorylated active-site intermediate. The sequence is that of Nucleoside diphosphate kinase from Geotalea daltonii (strain DSM 22248 / JCM 15807 / FRC-32) (Geobacter daltonii).